Reading from the N-terminus, the 291-residue chain is Segregation and condensation protein A (291 aa).

This sequence belongs to the ScpA family. As to quaternary structure, component of a cohesin-like complex composed of ScpA, ScpB and the Smc homodimer, in which ScpA and ScpB bind to the head domain of Smc. The presence of the three proteins is required for the association of the complex with DNA.

The protein resides in the cytoplasm. Functionally, participates in chromosomal partition during cell division. May act via the formation of a condensin-like complex containing Smc and ScpB that pull DNA away from mid-cell into both cell halves. This chain is Segregation and condensation protein A, found in Malacoplasma penetrans (strain HF-2) (Mycoplasma penetrans).